The chain runs to 190 residues: ATP synthase subunit b 1 (190 aa).

A helical transmembrane segment spans residues 35-55 (DFVVLLGFLLFLAILFYFGVP).

Belongs to the ATPase B chain family. F-type ATPases have 2 components, F(1) - the catalytic core - and F(0) - the membrane proton channel. F(1) has five subunits: alpha(3), beta(3), gamma(1), delta(1), epsilon(1). F(0) has three main subunits: a(1), b(2) and c(10-14). The alpha and beta chains form an alternating ring which encloses part of the gamma chain. F(1) is attached to F(0) by a central stalk formed by the gamma and epsilon chains, while a peripheral stalk is formed by the delta and b chains.

Its subcellular location is the cell inner membrane. F(1)F(0) ATP synthase produces ATP from ADP in the presence of a proton or sodium gradient. F-type ATPases consist of two structural domains, F(1) containing the extramembraneous catalytic core and F(0) containing the membrane proton channel, linked together by a central stalk and a peripheral stalk. During catalysis, ATP synthesis in the catalytic domain of F(1) is coupled via a rotary mechanism of the central stalk subunits to proton translocation. Functionally, component of the F(0) channel, it forms part of the peripheral stalk, linking F(1) to F(0). The chain is ATP synthase subunit b 1 from Jannaschia sp. (strain CCS1).